The sequence spans 37 residues: L-amino-acid oxidase (37 aa).

It belongs to the flavin monoamine oxidase family. FIG1 subfamily. In terms of assembly, homodimer; non-covalently linked. Requires FAD as cofactor. In terms of processing, N-Glycosylated. As to expression, expressed by the venom gland.

It is found in the secreted. The enzyme catalyses an L-alpha-amino acid + O2 + H2O = a 2-oxocarboxylate + H2O2 + NH4(+). It carries out the reaction L-leucine + O2 + H2O = 4-methyl-2-oxopentanoate + H2O2 + NH4(+). The catalysed reaction is L-phenylalanine + O2 + H2O = 3-phenylpyruvate + H2O2 + NH4(+). It catalyses the reaction L-tryptophan + O2 + H2O = indole-3-pyruvate + H2O2 + NH4(+). The enzyme catalyses L-methionine + O2 + H2O = 4-methylsulfanyl-2-oxobutanoate + H2O2 + NH4(+). It carries out the reaction L-isoleucine + O2 + H2O = (S)-3-methyl-2-oxopentanoate + H2O2 + NH4(+). The catalysed reaction is L-arginine + O2 + H2O = 5-guanidino-2-oxopentanoate + H2O2 + NH4(+). It catalyses the reaction L-histidine + O2 + H2O = 3-(imidazol-5-yl)pyruvate + H2O2 + NH4(+). The enzyme catalyses L-valine + O2 + H2O = 3-methyl-2-oxobutanoate + H2O2 + NH4(+). Catalyzes an oxidative deamination of predominantly hydrophobic and aromatic L-amino acids, thus producing hydrogen peroxide that may contribute to the diverse toxic effects of this enzyme. Is highly active on L-Leu, L-Met, moderately active on L-Arg, L-Trp, L-Phe, L-Val, L-His, and L-Ile, and is weakly or not active on L-Cys, L-Lys, L-Ala, L-Thr, L-Asp, L-Ser, and L-Pro. Exhibits diverse biological activities, such as hemorrhage, edema, apoptosis of vascular endothelial cells or tumor cell lines, as well as regulation of platelet aggregation. Effects of snake L-amino oxidases on platelets are controversial, since they either induce aggregation or inhibit agonist-induced aggregation. These different effects are probably due to different experimental conditions. This protein induce hemolysis and has antibacterial and antiparasitic activities (against the Gram-positive S.aureus). Tested in vivo, this protein significantly inhibits Ehrlich ascite tumors growth and induces an influx of polymorphonuclear cells, as well as spontaneous liberation of hydrogen peroxide from peritoneal macrophages. This chain is L-amino-acid oxidase, found in Bothrops jararaca (Jararaca).